Here is a 92-residue protein sequence, read N- to C-terminus: Small ribosomal subunit protein uS19 (92 aa).

Belongs to the universal ribosomal protein uS19 family.

Functionally, protein S19 forms a complex with S13 that binds strongly to the 16S ribosomal RNA. The sequence is that of Small ribosomal subunit protein uS19 from Bartonella henselae (strain ATCC 49882 / DSM 28221 / CCUG 30454 / Houston 1) (Rochalimaea henselae).